Here is a 573-residue protein sequence, read N- to C-terminus: Sulfite reductase [NADPH] hemoprotein beta-component (573 aa).

The tract at residues 1–20 (MAKVELKAPDGPPSDVERIK) is disordered. [4Fe-4S] cluster contacts are provided by Cys438, Cys444, Cys483, and Cys487. Siroheme is bound at residue Cys487.

Belongs to the nitrite and sulfite reductase 4Fe-4S domain family. In terms of assembly, alpha(8)-beta(8). The alpha component is a flavoprotein, the beta component is a hemoprotein. It depends on siroheme as a cofactor. Requires [4Fe-4S] cluster as cofactor.

It carries out the reaction hydrogen sulfide + 3 NADP(+) + 3 H2O = sulfite + 3 NADPH + 4 H(+). The protein operates within sulfur metabolism; hydrogen sulfide biosynthesis; hydrogen sulfide from sulfite (NADPH route): step 1/1. Its function is as follows. Component of the sulfite reductase complex that catalyzes the 6-electron reduction of sulfite to sulfide. This is one of several activities required for the biosynthesis of L-cysteine from sulfate. This Geobacillus kaustophilus (strain HTA426) protein is Sulfite reductase [NADPH] hemoprotein beta-component.